We begin with the raw amino-acid sequence, 433 residues long: Type I acyl-CoA thioesterase mpaH (433 aa).

The interval 58–246 is abhydrolase domain; it reads HGVGLPKELY…IKARFGTTAD (189 aa). Val-60 is a binding site for substrate. Ser-139 acts as the Nucleophile in catalysis. Substrate is bound at residue Phe-140. Residues Asp-163 and His-365 contribute to the active site.

The protein belongs to the AB hydrolase superfamily. MpaH hydrolase family. In terms of assembly, homodimer.

The protein resides in the peroxisome matrix. It carries out the reaction mycophenolyl-CoA + H2O = mycophenolate + CoA + H(+). It participates in secondary metabolite biosynthesis; terpenoid biosynthesis. In terms of biological role, type I acyl-CoA thioesterase; part of the gene cluster that mediates the biosynthesis of mycophenolic acid (MPA), the first isolated antibiotic natural product in the world obtained from a culture of Penicillium brevicompactum in 1893. MpaH acts as a peroxisomal acyl-CoA hydrolase that converts MPA-CoA into the final product MPA. The first step of the pathway is the synthesis of 5-methylorsellinic acid (5MOA) by the cytosolic polyketide synthase mpaC. 5MOA is then converted to the phthalide compound 5,7-dihydroxy-4,6-dimethylphthalide (DHMP) by the endoplasmic reticulum-bound cytochrome P450 monooxygenase mpaDE. MpaDE first catalyzes hydroxylation of 5-MOA to 4,6-dihydroxy-2-(hydroxymethyl)-3-methylbenzoic acid (DHMB). MpaDE then acts as a lactone synthase that catalyzes the ring closure to convert DHMB into DHMP. The next step is the prenylation of DHMP by the Golgi apparatus-associated prenyltransferase mpaA to yield farnesyl-DHMP (FDHMP). The ER-bound oxygenase mpaB then mediates the oxidative cleavage the C19-C20 double bond in FDHMP to yield FDHMP-3C via a mycophenolic aldehyde intermediate. The O-methyltransferase mpaG catalyzes the methylation of FDHMP-3C to yield MFDHMP-3C. After the cytosolic methylation of FDHMP-3C, MFDHMP-3C enters into peroxisomes probably via free diffusion due to its low molecular weight. Upon a peroxisomal CoA ligation reaction, catalyzed by a beta-oxidation component enzyme acyl-CoA ligase ACL891, MFDHMP-3C-CoA would then be restricted to peroxisomes for the following beta-oxidation pathway steps. The peroxisomal beta-oxidation machinery than converts MFDHMP-3C-CoA into MPA_CoA, via a beta-oxidation chain-shortening process. Finally mpaH acts as a peroxisomal acyl-CoA hydrolase with high substrate specificity toward MPA-CoA to release the final product MPA. The polypeptide is Type I acyl-CoA thioesterase mpaH (Penicillium brevicompactum).